The sequence spans 758 residues: Maturase-like protein 2 (758 aa).

Its subcellular location is the plastid. It is found in the chloroplast. The protein is Maturase-like protein 2 (mat2) of Euglena gracilis.